A 211-amino-acid polypeptide reads, in one-letter code: Thiamine-phosphate synthase (211 aa).

4-amino-2-methyl-5-(diphosphooxymethyl)pyrimidine-binding positions include 37 to 41 and asparagine 69; that span reads QLRIK. Mg(2+) contacts are provided by aspartate 70 and aspartate 89. 4-amino-2-methyl-5-(diphosphooxymethyl)pyrimidine is bound at residue serine 108. 134 to 136 lines the 2-[(2R,5Z)-2-carboxy-4-methylthiazol-5(2H)-ylidene]ethyl phosphate pocket; it reads TQT. Lysine 137 lines the 4-amino-2-methyl-5-(diphosphooxymethyl)pyrimidine pocket. 2-[(2R,5Z)-2-carboxy-4-methylthiazol-5(2H)-ylidene]ethyl phosphate-binding positions include glycine 166 and 186-187; that span reads VS.

Belongs to the thiamine-phosphate synthase family. Mg(2+) serves as cofactor.

It catalyses the reaction 2-[(2R,5Z)-2-carboxy-4-methylthiazol-5(2H)-ylidene]ethyl phosphate + 4-amino-2-methyl-5-(diphosphooxymethyl)pyrimidine + 2 H(+) = thiamine phosphate + CO2 + diphosphate. It carries out the reaction 2-(2-carboxy-4-methylthiazol-5-yl)ethyl phosphate + 4-amino-2-methyl-5-(diphosphooxymethyl)pyrimidine + 2 H(+) = thiamine phosphate + CO2 + diphosphate. The enzyme catalyses 4-methyl-5-(2-phosphooxyethyl)-thiazole + 4-amino-2-methyl-5-(diphosphooxymethyl)pyrimidine + H(+) = thiamine phosphate + diphosphate. It participates in cofactor biosynthesis; thiamine diphosphate biosynthesis; thiamine phosphate from 4-amino-2-methyl-5-diphosphomethylpyrimidine and 4-methyl-5-(2-phosphoethyl)-thiazole: step 1/1. Condenses 4-methyl-5-(beta-hydroxyethyl)thiazole monophosphate (THZ-P) and 2-methyl-4-amino-5-hydroxymethyl pyrimidine pyrophosphate (HMP-PP) to form thiamine monophosphate (TMP). The chain is Thiamine-phosphate synthase from Salmonella newport (strain SL254).